The chain runs to 415 residues: Mitogen-activated protein kinase kinae MST7 (415 aa).

The segment at 1–37 (MADPFAPRTMKRRNVKGLALTPAAPKPPPTAENAPIH) is disordered. In terms of domain architecture, Protein kinase spans 61 to 326 (LEVIKDLGSG…EELFERDPFV (266 aa)). ATP-binding positions include 67-75 (LGSGNGGTV) and K90. The tract at residues 363–409 (DLLRSSDSPTATYHGDDRPLETPTSAYRVDPRRGPAEGSAGLADQVD) is disordered.

The protein belongs to the protein kinase superfamily. STE Ser/Thr protein kinase family. MAP kinase kinase subfamily. In terms of assembly, homodimer. Interacts with the adapter protein MST50. Interacts with TRX2.

It catalyses the reaction L-seryl-[protein] + ATP = O-phospho-L-seryl-[protein] + ADP + H(+). The enzyme catalyses L-threonyl-[protein] + ATP = O-phospho-L-threonyl-[protein] + ADP + H(+). In terms of biological role, mitogen-activated protein kinase kinase; part of the MST11-MST7-PMK1 MAP kinase (MAPK) cascade that is essential for appressorium formation, penetration and invasive growth. The MST11-MST7-PMK1 MAP kinase cascade transduces signals from the cell surface sensors MDB2 and SHO1 that recognize various surface signals such as surface hydrophobicity, cutin monomers, and rice leaf waxes. MST7 acts as the upstream MAPKK that directly phosphorylates MAP kinase PMK1. This is Mitogen-activated protein kinase kinae MST7 from Pyricularia oryzae (strain 70-15 / ATCC MYA-4617 / FGSC 8958) (Rice blast fungus).